Here is a 300-residue protein sequence, read N- to C-terminus: 4-hydroxy-tetrahydrodipicolinate synthase (300 aa).

Residue T53 participates in pyruvate binding. Y141 acts as the Proton donor/acceptor in catalysis. K169 (schiff-base intermediate with substrate) is an active-site residue. T211 is a pyruvate binding site.

This sequence belongs to the DapA family. In terms of assembly, homotetramer; dimer of dimers.

The protein resides in the cytoplasm. It catalyses the reaction L-aspartate 4-semialdehyde + pyruvate = (2S,4S)-4-hydroxy-2,3,4,5-tetrahydrodipicolinate + H2O + H(+). It functions in the pathway amino-acid biosynthesis; L-lysine biosynthesis via DAP pathway; (S)-tetrahydrodipicolinate from L-aspartate: step 3/4. Catalyzes the condensation of (S)-aspartate-beta-semialdehyde [(S)-ASA] and pyruvate to 4-hydroxy-tetrahydrodipicolinate (HTPA). The chain is 4-hydroxy-tetrahydrodipicolinate synthase from Rickettsia massiliae (strain Mtu5).